A 299-amino-acid chain; its full sequence is Putative activator of 90 kDa heat shock protein ATPase homolog 2 (299 aa).

Belongs to the AHA1 family.

Co-chaperone that stimulates HSP90 ATPase activity. In Homo sapiens (Human), this protein is Putative activator of 90 kDa heat shock protein ATPase homolog 2.